The chain runs to 321 residues: Glucokinase (321 aa).

Gly8 to Thr13 lines the ATP pocket.

Belongs to the bacterial glucokinase family.

The protein resides in the cytoplasm. It carries out the reaction D-glucose + ATP = D-glucose 6-phosphate + ADP + H(+). This Salmonella arizonae (strain ATCC BAA-731 / CDC346-86 / RSK2980) protein is Glucokinase.